Consider the following 201-residue polypeptide: Holliday junction resolvase RecU (201 aa).

The interval 1 to 26 (MAIGYPNGKKYAASQEELPQQKRKAP) is disordered. Residues threonine 87, aspartate 89, glutamate 102, and glutamine 121 each contribute to the Mg(2+) site.

The protein belongs to the RecU family. Requires Mg(2+) as cofactor.

The protein localises to the cytoplasm. The enzyme catalyses Endonucleolytic cleavage at a junction such as a reciprocal single-stranded crossover between two homologous DNA duplexes (Holliday junction).. Endonuclease that resolves Holliday junction intermediates in genetic recombination. Cleaves mobile four-strand junctions by introducing symmetrical nicks in paired strands. Promotes annealing of linear ssDNA with homologous dsDNA. Required for DNA repair, homologous recombination and chromosome segregation. This chain is Holliday junction resolvase RecU, found in Listeria monocytogenes serotype 4a (strain HCC23).